Consider the following 289-residue polypeptide: Oxaloacetate decarboxylase (289 aa).

S50 serves as a coordination point for substrate. D88 is a binding site for Mg(2+). Residues R159 and H235 each contribute to the substrate site.

This sequence belongs to the isocitrate lyase/PEP mutase superfamily. Oxaloacetate decarboxylase family. In terms of assembly, homotetramer; dimer of dimers. Mg(2+) is required as a cofactor.

It catalyses the reaction oxaloacetate + H(+) = pyruvate + CO2. Functionally, catalyzes the decarboxylation of oxaloacetate into pyruvate. Seems to play a role in maintaining cellular concentrations of bicarbonate and pyruvate. The sequence is that of Oxaloacetate decarboxylase from Pseudomonas savastanoi pv. phaseolicola (strain 1448A / Race 6) (Pseudomonas syringae pv. phaseolicola (strain 1448A / Race 6)).